Reading from the N-terminus, the 362-residue chain is Phosphoserine aminotransferase (362 aa).

2 residues coordinate L-glutamate: S9 and R42. Residues 76–77, W102, T153, D174, and Q197 each bind pyridoxal 5'-phosphate; that span reads GR. An N6-(pyridoxal phosphate)lysine modification is found at K198. Residue 239-240 coordinates pyridoxal 5'-phosphate; sequence NT.

This sequence belongs to the class-V pyridoxal-phosphate-dependent aminotransferase family. SerC subfamily. In terms of assembly, homodimer. It depends on pyridoxal 5'-phosphate as a cofactor.

It localises to the cytoplasm. The enzyme catalyses O-phospho-L-serine + 2-oxoglutarate = 3-phosphooxypyruvate + L-glutamate. It catalyses the reaction 4-(phosphooxy)-L-threonine + 2-oxoglutarate = (R)-3-hydroxy-2-oxo-4-phosphooxybutanoate + L-glutamate. Its pathway is amino-acid biosynthesis; L-serine biosynthesis; L-serine from 3-phospho-D-glycerate: step 2/3. It functions in the pathway cofactor biosynthesis; pyridoxine 5'-phosphate biosynthesis; pyridoxine 5'-phosphate from D-erythrose 4-phosphate: step 3/5. In terms of biological role, catalyzes the reversible conversion of 3-phosphohydroxypyruvate to phosphoserine and of 3-hydroxy-2-oxo-4-phosphonooxybutanoate to phosphohydroxythreonine. This chain is Phosphoserine aminotransferase, found in Escherichia coli O157:H7.